The sequence spans 347 residues: NADH-ubiquinone oxidoreductase chain 2 (347 aa).

The next 11 membrane-spanning stretches (helical) occupy residues P3–T23, H25–M45, Y59–V79, I96–P116, V122–L142, I149–G169, I178–P198, M200–M220, L240–F260, M276–L296, and L326–L346.

Belongs to the complex I subunit 2 family. Core subunit of respiratory chain NADH dehydrogenase (Complex I) which is composed of 45 different subunits. Interacts with TMEM242.

It localises to the mitochondrion inner membrane. It carries out the reaction a ubiquinone + NADH + 5 H(+)(in) = a ubiquinol + NAD(+) + 4 H(+)(out). Core subunit of the mitochondrial membrane respiratory chain NADH dehydrogenase (Complex I) which catalyzes electron transfer from NADH through the respiratory chain, using ubiquinone as an electron acceptor. Essential for the catalytic activity and assembly of complex I. The sequence is that of NADH-ubiquinone oxidoreductase chain 2 from Nyctimene albiventer (Common tube-nosed fruit bat).